The chain runs to 414 residues: CinA-like protein (414 aa).

Belongs to the CinA family.

This is CinA-like protein from Geobacter sp. (strain M21).